The primary structure comprises 121 residues: MARIAGIDLPKNKHIDRALTYIHGIGLTSARKILDAVELPYTMNSDDLDGETVNRIRKVIEADYTVEGDRRREVSMDIKRLTDLGCYRGRRHRMGLPCRGQKTKTNARTRKGPRRGAARRK.

The tract at residues 92–121 (HRMGLPCRGQKTKTNARTRKGPRRGAARRK) is disordered. A compositionally biased stretch (basic residues) spans 101 to 121 (QKTKTNARTRKGPRRGAARRK).

Belongs to the universal ribosomal protein uS13 family. As to quaternary structure, part of the 30S ribosomal subunit. Forms a loose heterodimer with protein S19. Forms two bridges to the 50S subunit in the 70S ribosome.

Its function is as follows. Located at the top of the head of the 30S subunit, it contacts several helices of the 16S rRNA. In the 70S ribosome it contacts the 23S rRNA (bridge B1a) and protein L5 of the 50S subunit (bridge B1b), connecting the 2 subunits; these bridges are implicated in subunit movement. Contacts the tRNAs in the A and P-sites. In Desulfotalea psychrophila (strain LSv54 / DSM 12343), this protein is Small ribosomal subunit protein uS13.